We begin with the raw amino-acid sequence, 913 residues long: DNA repair endonuclease XPF (913 aa).

The interval 1–454 is helicase-like; the sequence is MDRGISAVRK…EVWVNLRKGD (454 aa). 2 leucine-zipper regions span residues 233–254 and 270–298; these read LNAC…DLSL and LDPL…LQYL. Lysine 289 is modified (N6-acetyllysine). Over residues 453-476 the composition is skewed to basic and acidic residues; the sequence is GDGPKRTMKSDKRPKDTKNKERAS. Disordered regions lie at residues 453 to 525 and 638 to 677; these read GDGP…CGGE and VVPE…HNGT. Positions 483–488 match the Nuclear localization signal motif; that stretch reads KRKKRE. The span at 500–509 shows a compositional bias: acidic residues; that stretch reads EPPEEGAAEE. The residue at position 518 (serine 518) is a Phosphoserine. Over residues 638–649 the composition is skewed to basic and acidic residues; the sequence is VVPEEREGRDET. The interval 655–810 is nuclease; it reads RGTVSTDAPA…PSPHATAELF (156 aa). One can recognise an ERCC4 domain in the interval 680 to 760; that stretch reads SIVVDMREFR…RPVLLIEFDA (81 aa). Residues 834–902 form a hhH2, dimerization with ERCC1 region; that stretch reads TLPESDKYNP…QLYDFLHTAY (69 aa).

Belongs to the XPF family. Heterodimer composed of ERCC1 and ERCC4/XPF. Interacts with SLX4/BTBD12; this interaction is direct and links the ERCC1-ERCC4/XPF complex to SLX4, which may coordinate the action of the structure-specific endonuclease during DNA repair. It depends on Mg(2+) as a cofactor.

The protein resides in the nucleus. Its subcellular location is the chromosome. In terms of biological role, catalytic component of a structure-specific DNA repair endonuclease responsible for the 5-prime incision during DNA repair, and which is essential for nucleotide excision repair (NER) and interstrand cross-link (ICL) repair. This Cricetulus griseus (Chinese hamster) protein is DNA repair endonuclease XPF.